Here is a 66-residue protein sequence, read N- to C-terminus: Clusterin (66 aa).

Belongs to the clusterin family. Antiparallel disulfide-linked heterodimer of an alpha chain and a beta chain. Self-associates and forms higher oligomers. Interacts with a broad range of misfolded proteins, including APP, APOC2 and LYZ. Slightly acidic pH promotes interaction with misfolded proteins. Forms high-molecular weight oligomers upon interaction with misfolded proteins. Interacts with APOA1, LRP2, CLUAP1 and PON1. Interacts with the complement membrane attack complex. Interacts (via alpha chain) with XRCC6. Interacts with SYVN1, COMMD1, BTRC, CUL1 and with ubiquitin and SCF (SKP1-CUL1-F-box protein) E3 ubiquitin-protein ligase complexes. Interacts (via alpha chain) with BAX in stressed cells, where BAX undergoes a conformation change leading to association with the mitochondrial membrane. Does not interact with BAX in unstressed cells. Found in a complex with LTF, CLU, EPPIN and SEMG1. Interacts (immaturely glycosylated pre-secreted form) with HSPA5; this interaction promotes CLU stability and facilitates stress-induced CLU retrotranslocation from the secretory pathway to the mitochondria, thereby reducing stress-induced apoptosis by stabilizing mitochondrial membrane integrity. Interacts with BCL2L1; this interaction releases and activates BAX and promotes cell death. Interacts with TGFBR2 and ACVR1. Interacts (secreted form) with STMN3; this interaction may act as an important modulator during neuronal differentiation. Component of a epididymal complex at least composed of soluble form of prion protein PRNP, CLU, BPI, CES5A, MANBA and GLB1. Post-translationally, proteolytically cleaved on its way through the secretory system, probably within the Golgi lumen. Proteolytic cleavage is not necessary for its chaperone activity. All non-secreted forms are not proteolytically cleaved. Chaperone activity of uncleaved forms is dependent on a non-reducing environment. In terms of processing, polyubiquitinated, leading to proteasomal degradation. Under cellular stress, the intracellular level of cleaved form is reduced due to proteasomal degradation. Heavily N-glycosylated. About 30% of the protein mass is comprised of complex N-linked carbohydrate. Endoplasmic reticulum (ER) stress induces changes in glycosylation status and increases level of hypoglycosylated forms. Core carbohydrates are essential for chaperone activity. Non-secreted forms are hypoglycosylated or unglycosylated.

The protein localises to the secreted. The protein resides in the nucleus. It is found in the cytoplasm. It localises to the mitochondrion membrane. Its subcellular location is the cytosol. The protein localises to the microsome. The protein resides in the endoplasmic reticulum. It is found in the mitochondrion. It localises to the perinuclear region. Its subcellular location is the cytoplasmic vesicle. The protein localises to the secretory vesicle. The protein resides in the chromaffin granule. Its function is as follows. Functions as extracellular chaperone that prevents aggregation of non native proteins. Prevents stress-induced aggregation of blood plasma proteins. Inhibits formation of amyloid fibrils by APP, APOC2, B2M, CALCA, CSN3, SNCA and aggregation-prone LYZ variants (in vitro). Does not require ATP. Maintains partially unfolded proteins in a state appropriate for subsequent refolding by other chaperones, such as HSPA8/HSC70. Does not refold proteins by itself. Binding to cell surface receptors triggers internalization of the chaperone-client complex and subsequent lysosomal or proteasomal degradation. When secreted, protects cells against apoptosis and against cytolysis by complement: inhibits assembly of the complement membrane attack complex (MAC) by preventing polymerization of C9 pore component of the MAC complex. Intracellular forms interact with ubiquitin and SCF (SKP1-CUL1-F-box protein) E3 ubiquitin-protein ligase complexes and promote the ubiquitination and subsequent proteasomal degradation of target proteins. Promotes proteasomal degradation of COMMD1 and IKBKB. Modulates NF-kappa-B transcriptional activity. Following stress, promotes apoptosis. Inhibits apoptosis when associated with the mitochondrial membrane by interference with BAX-dependent release of cytochrome c into the cytoplasm. Plays a role in the regulation of cell proliferation. An intracellular form suppresses stress-induced apoptosis by stabilizing mitochondrial membrane integrity through interaction with HSPA5. Secreted form does not affect caspase or BAX-mediated intrinsic apoptosis and TNF-induced NF-kappa-B-activity. Secreted form act as an important modulator during neuronal differentiation through interaction with STMN3. Plays a role in the clearance of immune complexes that arise during cell injury. This Ovis aries (Sheep) protein is Clusterin (CLU).